We begin with the raw amino-acid sequence, 172 residues long: MARPLGRVAALLLGLLMECTEAKKHCWYFEGLYPTYYICRSYEDCCGSRCCVRALSIQRLWYFWFLLMMGVLFCCGAGFFIRRRMYPPPLIEEPTFNVSYTRQPPNPAPGAQQMGPPYYTDPGGPGMNPVGNTMAMAFQVQPNSPHGGTTYPPPPSYCNTPPPPYEQVVKDK.

An N-terminal signal peptide occupies residues Met1–Ala22. Topologically, residues Lys23–Leu60 are extracellular. The chain crosses the membrane as a helical span at residues Trp61 to Ile81. Over Arg82–Lys172 the chain is Cytoplasmic. The disordered stretch occupies residues Gln139–Lys172. Residues Tyr151 to Tyr165 are compositionally biased toward pro residues.

It belongs to the VOPP1/ECOP family. In terms of assembly, interacts with WWOX (via WW domain).

The protein localises to the cytoplasmic vesicle membrane. It is found in the late endosome membrane. Its subcellular location is the lysosome membrane. Its function is as follows. Increases the transcriptional activity of NFKB1 by facilitating its nuclear translocation, DNA-binding and associated apoptotic response, when overexpressed. May sequester WWOX in lysosomal vesicles and thereby regulate WWOX role as tumor suppressor. The polypeptide is WW domain binding protein VOPP1 (Rattus norvegicus (Rat)).